The sequence spans 230 residues: Oxaloacetate tautomerase FAHD1, mitochondrial (230 aa).

Residues 1–26 (MAAAAAAAAQRLLAASTKIIGVGRNY) constitute a mitochondrion transit peptide. Mg(2+) is bound by residues Glu-73, Glu-75, and Asp-104.

This sequence belongs to the FAH family. The cofactor is Mg(2+). Mn(2+) serves as cofactor.

The protein localises to the mitochondrion. The catalysed reaction is oxaloacetate = enol-oxaloacetate. Tautomerase that converts enol-oxaloacetate, a strong inhibitor of succinate dehydrogenase, to the physiological keto form of oxaloacetate. The sequence is that of Oxaloacetate tautomerase FAHD1, mitochondrial from Oryza sativa subsp. japonica (Rice).